The chain runs to 245 residues: Aliphatic sulfonates import ATP-binding protein SsuB 1 (245 aa).

The 216-residue stretch at 8-223 folds into the ABC transporter domain; that stretch reads VSITGLRKSF…ERADPDILRY (216 aa). 40–47 contacts ATP; the sequence is GPSGTGKT.

Belongs to the ABC transporter superfamily. Aliphatic sulfonates importer (TC 3.A.1.17.2) family. As to quaternary structure, the complex is composed of two ATP-binding proteins (SsuB), two transmembrane proteins (SsuC) and a solute-binding protein (SsuA).

The protein resides in the cell membrane. The catalysed reaction is ATP + H2O + aliphatic sulfonate-[sulfonate-binding protein]Side 1 = ADP + phosphate + aliphatic sulfonateSide 2 + [sulfonate-binding protein]Side 1.. Its function is as follows. Part of the ABC transporter complex SsuABC involved in aliphatic sulfonates import. Responsible for energy coupling to the transport system. The chain is Aliphatic sulfonates import ATP-binding protein SsuB 1 from Nocardia farcinica (strain IFM 10152).